The sequence spans 524 residues: MECVGARNFAAMAVSTFPSWSCRRKFPVVKRYSYRNIRFGLCSVRASGGGSSGSESCVAVREDFADEEDFVKAGGSEILFVQMQQNKDMDEQSKLVDKLPPISIGDGALDLVVIGCGPAGLALAAESAKLGLKVGLIGPDLPFTNNYGVWEDEFNDLGLQKCIEHVWRETIVYLDDDKPITIGRAYGRVSRRLLHEELLRRCVESGVSYLSSKVDSITEASDGLRLVACDDNNVIPCRLATVASGAASGKLLQYEVGGPRVCVQTAYGVEVEVENSPYDPDQMVFMDYRDYTNEKVRSLEAEYPTFLYAMPMTKSRLFFEETCLASKDVMPFDLLKTKLMLRLDTLGIRILKTYEEEWSYIPVGGSLPNTEQKNLAFGAAASMVHPATGYSVVRSLSEAPKYASVIAEILREETTKQINSNISRQAWDTLWPPERKRQRAFFLFGLALIVQFDTEGIRSFFRTFFRLPKWMWQGFLGSTLTSGDLVLFALYMFVISPNNLRKGLINHLISDPTGATMIKTYLKV.

Residues methionine 1–arginine 45 constitute a chloroplast transit peptide. Leucine 111–proline 139 lines the NAD(+) pocket. A run of 2 helical transmembrane segments spans residues phenylalanine 441–phenylalanine 461 and phenylalanine 475–isoleucine 495.

It belongs to the lycopene cyclase family.

Its subcellular location is the plastid. The protein resides in the chloroplast membrane. It carries out the reaction a carotenoid psi-end group = a carotenoid epsilon-end group. It functions in the pathway carotenoid biosynthesis; alpha-zeacarotene biosynthesis. It participates in carotenoid biosynthesis; delta-carotene biosynthesis. Its function is as follows. Involved in carotenoid biosynthesis. Catalyzes the single epsilon-cyclization reaction which converts lycopene to delta-carotene and neurosporene to alpha-zeacarotene. Required for lutein biosynthesis. The chain is Lycopene epsilon cyclase, chloroplastic from Arabidopsis thaliana (Mouse-ear cress).